A 2178-amino-acid polypeptide reads, in one-letter code: Streptococcal hemagglutinin (2178 aa).

The first 90 residues, 1–90, serve as a signal peptide directing secretion; the sequence is MFFKRQKGQY…AVVTSSSVYA (90 aa). A non-repeat region 1 (NR1) region spans residues 91-137; the sequence is EEEQALEKVIDTRDVLATRGEAVLSEEAATTLSSEGANPVESLSDTL. A ser-rich region 1 (SR1) region spans residues 138-219; sequence SASESASANS…SLISSDSSNS (82 aa). The segment covering 192 to 244 has biased composition (low complexity); it reads TSQSFSSTTSSTQSSNNESLISSDSSNSLNTNQSVSARNQNARVRTRRAVAAN. Disordered stretches follow at residues 192-246, 495-557, 584-653, 836-857, 884-917, 944-993, 1020-1289, 1341-1390, 1488-1685, 1725-1901, and 2119-2151; these read TSQS…ANDT, VSAS…SVSA, SAST…SVSA, SAST…SESA, SASV…SVSA, ASTS…ESAS, ASTS…SAST, and LSQS…GESE. A non-repeat region 2 (NR2) region spans residues 220–449; the sequence is LNTNQSVSAR…ANRVVKDLQI (230 aa). The tract at residues 450–2143 is ser-rich region 2 (SR2); that stretch reads SKSNSASQSS…SMHDRISKGQ (1694 aa). The span at 2119–2130 shows a compositional bias: low complexity; the sequence is LSQSLSDSQSTS. Residues 2144-2148 carry the LPXTG sorting signal motif; the sequence is LPRTG. Threonine 2147 is subject to Pentaglycyl murein peptidoglycan amidated threonine. A propeptide spans 2148 to 2178 (removed by sortase); sequence GESESKASILALGIGALGLAFKKRKKNESED.

Belongs to the serine-rich repeat protein (SRRP) family. In terms of processing, the protein is glycosylated in vivo; constructs without SR1 and SR2 are not glycosylated.

The protein resides in the secreted. It localises to the cell wall. A cell wall protein involved with PadA in host cell interactions required for colonization and pathogensis. Mediates hemagglutination and adherence to ghst glycoproteins. Recognizes fetuin-A (AHSG), a highly glycosylated human plasma protein, also involved in recognition of human platelets, probably via platelet glycoprotein Ib alpha (GP1BA). Acts in concert with PadA to promote binding to glycosylated human fibronectin (FN1) and vitronectin (VTN), and biofilm formation. Plays a major role in fibronectin and vitronectin binding; binding is mediated by glycosylated regions. Probably mediates interaction of PadA with resting platelets. The chain is Streptococcal hemagglutinin from Streptococcus gordonii (strain Challis / ATCC 35105 / BCRC 15272 / CH1 / DL1 / V288).